A 598-amino-acid polypeptide reads, in one-letter code: DNA polymerase alpha subunit B (598 aa).

The segment covering 112–140 has biased composition (polar residues); sequence SYTTPSKGSQKRAISTPETPLTKRSVSTR. Positions 112-167 are disordered; it reads SYTTPSKGSQKRAISTPETPLTKRSVSTRSPHQLLSPSSFSPSATPSQKYNSRSNR. Phosphoserine is present on Ser-126. Residues Thr-127 and Thr-130 each carry the phosphothreonine modification. A phosphoserine mark is found at Ser-141, Ser-147, Ser-152, and Ser-154. Positions 141-158 are enriched in low complexity; the sequence is SPHQLLSPSSFSPSATPS.

This sequence belongs to the DNA polymerase alpha subunit B family. Component of the alpha DNA polymerase complex (also known as the alpha DNA polymerase-primase complex) consisting of four subunits: the catalytic subunit POLA1, the regulatory subunit POLA2, and primase complex subunits PRIM1 and PRIM2 respectively. Within the complex, POLA1 directly interacts with PRIM2/p58. Post-translationally, phosphorylated in a cell cycle-dependent manner, in G2/M phase.

The protein localises to the nucleus. Its function is as follows. Accessory subunit of the DNA polymerase alpha complex (also known as the alpha DNA polymerase-primase complex) which plays an essential role in the initiation of DNA synthesis. During the S phase of the cell cycle, the DNA polymerase alpha complex (composed of a catalytic subunit POLA1, an accessory subunit POLA2 and two primase subunits, the catalytic subunit PRIM1 and the regulatory subunit PRIM2) is recruited to DNA at the replicative forks via direct interactions with MCM10 and WDHD1. The primase subunit of the polymerase alpha complex initiates DNA synthesis by oligomerising short RNA primers on both leading and lagging strands. These primers are initially extended by the polymerase alpha catalytic subunit and subsequently transferred to polymerase delta and polymerase epsilon for processive synthesis on the lagging and leading strand, respectively. In Homo sapiens (Human), this protein is DNA polymerase alpha subunit B (POLA2).